A 183-amino-acid chain; its full sequence is SAYSvFN domain-containing protein 1 (183 aa).

The Cytoplasmic segment spans residues 1 to 105 (MEQRLAEFRA…SFLTNITFLK (105 aa)). The tract at residues 11-36 (ARKRAGLAAQPPAASQGAQTPGEKAE) is disordered. Residues 16 to 36 (GLAAQPPAASQGAQTPGEKAE) are compositionally biased toward low complexity. The segment at 91 to 105 (SCWDQSFLTNITFLK) is middle helical (MH). An intramembrane region (helical) is located at residues 106 to 126 (VLLWLVLLGLFVELEFGLAYF). The Cytoplasmic segment spans residues 127–183 (VLSLFYWMYVGTRGPEEKKEGEKSAYSVFNPGCEAIQGTLTAEQLERELQLRPLAGR).

This sequence belongs to the SAYSD1 family. As to quaternary structure, associates (via N-terminus) with ribosomes.

It localises to the endoplasmic reticulum membrane. The protein localises to the cytoplasmic vesicle membrane. Functionally, ufmylation 'reader' component of a translocation-associated quality control pathway, a mechanism that takes place when a ribosome has stalled during translation, and which is required to degrade clogged substrates. Specifically recognizes and binds ufmylated ribosomes when a ribosome has stalled, promoting the transport of stalled nascent chain via the TRAPP complex to lysosomes for degradation. This is SAYSvFN domain-containing protein 1 from Homo sapiens (Human).